A 637-amino-acid polypeptide reads, in one-letter code: Chaperone protein DnaK (637 aa).

T198 is modified (phosphothreonine; by autocatalysis). Residues 597 to 637 (MYQQAAQESGQTEGAAQDPKGAAQDDDVVDADFEEVKDHKK) are disordered. Polar residues predominate over residues 600 to 610 (QAAQESGQTEG). A compositionally biased stretch (acidic residues) spans 620-629 (QDDDVVDADF).

This sequence belongs to the heat shock protein 70 family.

Its function is as follows. Acts as a chaperone. This chain is Chaperone protein DnaK, found in Desulforapulum autotrophicum (strain ATCC 43914 / DSM 3382 / VKM B-1955 / HRM2) (Desulfobacterium autotrophicum).